Reading from the N-terminus, the 150-residue chain is UPF0336 protein SAV_4901 (150 aa).

The region spanning 8–126 (VGRSYPPTDP…GNDVVDVRGE (119 aa)) is the MaoC-like domain.

It belongs to the UPF0336 family.

The sequence is that of UPF0336 protein SAV_4901 from Streptomyces avermitilis (strain ATCC 31267 / DSM 46492 / JCM 5070 / NBRC 14893 / NCIMB 12804 / NRRL 8165 / MA-4680).